The primary structure comprises 219 residues: Cytidylate kinase (219 aa).

15–23 (GPAASGKGT) serves as a coordination point for ATP.

Belongs to the cytidylate kinase family. Type 1 subfamily.

The protein resides in the cytoplasm. The catalysed reaction is CMP + ATP = CDP + ADP. The enzyme catalyses dCMP + ATP = dCDP + ADP. The protein is Cytidylate kinase of Brucella melitensis biotype 1 (strain ATCC 23456 / CCUG 17765 / NCTC 10094 / 16M).